We begin with the raw amino-acid sequence, 157 residues long: MSRNNEELQGISLLGNQKTQYPTGYAPEILEAFDNKHPDNDYFVKFVCPEFTSLCPMTGQPDFATIVIRYIPHIKMVESKSLKLYLFSFRNHGDFHEDCVNIIMKDLIALMDPKYIEVFGEFTPRGGIAVHPFANYGKAGTEFEALARKRLFEHDAQ.

The active-site Thioimide intermediate is Cys-55. Catalysis depends on Asp-62, which acts as the Proton donor. Substrate-binding positions include 77–79 (VES) and 96–97 (HE).

It belongs to the GTP cyclohydrolase I family. QueF type 1 subfamily.

The protein resides in the cytoplasm. The enzyme catalyses 7-aminomethyl-7-carbaguanine + 2 NADP(+) = 7-cyano-7-deazaguanine + 2 NADPH + 3 H(+). The protein operates within tRNA modification; tRNA-queuosine biosynthesis. Catalyzes the NADPH-dependent reduction of 7-cyano-7-deazaguanine (preQ0) to 7-aminomethyl-7-deazaguanine (preQ1). This Neisseria gonorrhoeae (strain ATCC 700825 / FA 1090) protein is NADPH-dependent 7-cyano-7-deazaguanine reductase.